The sequence spans 761 residues: Subtilisin-like protease SBT3.15 (761 aa).

The first 21 residues, 1–21 (MENSFLSSKLVFLLAIALVLF), serve as a signal peptide directing secretion. The propeptide at 22-120 (LNTELSFLTA…VIPNRILKLK (99 aa)) is activation peptide. An Inhibitor I9 domain is found at 41-119 (VYIVYLGQRE…HVIPNRILKL (79 aa)). The Peptidase S8 domain occupies 134-613 (PTSFSSSSSA…GGLVNPEKAA (480 aa)). Asparagine 151 carries N-linked (GlcNAc...) asparagine glycosylation. Catalysis depends on aspartate 164, which acts as the Charge relay system. Asparagine 197 carries N-linked (GlcNAc...) asparagine glycosylation. Histidine 241 acts as the Charge relay system in catalysis. Asparagine 256 and asparagine 384 each carry an N-linked (GlcNAc...) asparagine glycan. Serine 544 serves as the catalytic Charge relay system. A glycan (N-linked (GlcNAc...) asparagine) is linked at asparagine 636.

Belongs to the peptidase S8 family.

Its subcellular location is the secreted. In Arabidopsis thaliana (Mouse-ear cress), this protein is Subtilisin-like protease SBT3.15.